A 156-amino-acid chain; its full sequence is Small ribosomal subunit protein uS7 (156 aa).

It belongs to the universal ribosomal protein uS7 family. In terms of assembly, part of the 30S ribosomal subunit. Contacts proteins S9 and S11.

Functionally, one of the primary rRNA binding proteins, it binds directly to 16S rRNA where it nucleates assembly of the head domain of the 30S subunit. Is located at the subunit interface close to the decoding center, probably blocks exit of the E-site tRNA. The polypeptide is Small ribosomal subunit protein uS7 (Cellvibrio japonicus (strain Ueda107) (Pseudomonas fluorescens subsp. cellulosa)).